A 437-amino-acid chain; its full sequence is Purple acid phosphatase 21 (437 aa).

An N-terminal signal peptide occupies residues 1-25 (MKKMKIFGFLISFSLFFLSPFVCQA). N-linked (GlcNAc...) asparagine glycosylation occurs at asparagine 30. Aspartate 152, aspartate 179, and tyrosine 182 together coordinate Fe cation. Aspartate 179 provides a ligand contact to Zn(2+). 2 residues coordinate Zn(2+): asparagine 212 and histidine 296. Substrate is bound at residue asparagine 212. Catalysis depends on histidine 306, which acts as the Proton donor. Residue histidine 333 coordinates Zn(2+). 333–335 (HVH) provides a ligand contact to substrate. Histidine 335 contacts Fe cation.

Belongs to the metallophosphoesterase superfamily. Purple acid phosphatase family. Homodimer. Fe cation is required as a cofactor. Requires Zn(2+) as cofactor. As to expression, expressed flowers and siliques.

Its subcellular location is the secreted. The catalysed reaction is a phosphate monoester + H2O = an alcohol + phosphate. This chain is Purple acid phosphatase 21 (PAP21), found in Arabidopsis thaliana (Mouse-ear cress).